A 315-amino-acid polypeptide reads, in one-letter code: tRNA dimethylallyltransferase (315 aa).

Residue 13–20 coordinates ATP; sequence GPTASGKS. 15-20 contributes to the substrate binding site; that stretch reads TASGKS. Interaction with substrate tRNA regions lie at residues 38–41 and 162–166; these read DSMQ and QRLAR.

It belongs to the IPP transferase family. As to quaternary structure, monomer. Mg(2+) serves as cofactor.

The catalysed reaction is adenosine(37) in tRNA + dimethylallyl diphosphate = N(6)-dimethylallyladenosine(37) in tRNA + diphosphate. Its function is as follows. Catalyzes the transfer of a dimethylallyl group onto the adenine at position 37 in tRNAs that read codons beginning with uridine, leading to the formation of N6-(dimethylallyl)adenosine (i(6)A). This chain is tRNA dimethylallyltransferase, found in Paramagnetospirillum magneticum (strain ATCC 700264 / AMB-1) (Magnetospirillum magneticum).